A 161-amino-acid chain; its full sequence is 2-C-methyl-D-erythritol 2,4-cyclodiphosphate synthase (161 aa).

Positions 10 and 12 each coordinate a divalent metal cation. Residues D10–H12 and H36–S37 each bind 4-CDP-2-C-methyl-D-erythritol 2-phosphate. H44 is a binding site for a divalent metal cation. 4-CDP-2-C-methyl-D-erythritol 2-phosphate contacts are provided by residues D58 to G60, F63 to D67, and R144.

The protein belongs to the IspF family. In terms of assembly, homotrimer. It depends on a divalent metal cation as a cofactor.

It carries out the reaction 4-CDP-2-C-methyl-D-erythritol 2-phosphate = 2-C-methyl-D-erythritol 2,4-cyclic diphosphate + CMP. The protein operates within isoprenoid biosynthesis; isopentenyl diphosphate biosynthesis via DXP pathway; isopentenyl diphosphate from 1-deoxy-D-xylulose 5-phosphate: step 4/6. In terms of biological role, involved in the biosynthesis of isopentenyl diphosphate (IPP) and dimethylallyl diphosphate (DMAPP), two major building blocks of isoprenoid compounds. Catalyzes the conversion of 4-diphosphocytidyl-2-C-methyl-D-erythritol 2-phosphate (CDP-ME2P) to 2-C-methyl-D-erythritol 2,4-cyclodiphosphate (ME-CPP) with a corresponding release of cytidine 5-monophosphate (CMP). The polypeptide is 2-C-methyl-D-erythritol 2,4-cyclodiphosphate synthase (Burkholderia lata (strain ATCC 17760 / DSM 23089 / LMG 22485 / NCIMB 9086 / R18194 / 383)).